We begin with the raw amino-acid sequence, 1790 residues long: Intracellular protein transport protein USO1 (1790 aa).

The tract at residues 1 to 724 (MDIIQGLIQQ…LSHDPDEEPI (724 aa)) is globular head. 10 ARM repeats span residues 45 to 89 (AFSR…LFIR), 127 to 170 (QFSL…AVMA), 173 to 213 (PLKA…MAVV), 215 to 260 (DSPH…NILK), 261 to 312 (YNTS…VSLT), 314 to 362 (EPGN…NMVR), 363 to 429 (SNEH…LKAY), 431 to 512 (MDNF…PFKL), 543 to 584 (GNDL…LIYW), and 586 to 630 (FGDF…LGVA). The tract at residues 452 to 484 (TNNVGDNAKENGGSNKSDKESDSDKDTDGKDGT) is disordered. Positions 465–487 (SNKSDKESDSDKDTDGKDGTEYE) are charged (hyper-hydrophilic). Residues 467-484 (KSDKESDSDKDTDGKDGT) show a composition bias toward basic and acidic residues. Positions 725-1790 (NKISFEEVEK…EEDEEEGQVA (1066 aa)) form a coiled coil. Residues 991-1790 (ESSIQLSNLQ…EEDEEEGQVA (800 aa)) form a dispensable for the protein function region. Disordered regions lie at residues 1185 to 1221 (EITS…SNLK), 1326 to 1351 (KEKS…EEQL), 1485 to 1547 (GLKK…EDIK), 1645 to 1667 (QELD…EVRK), 1722 to 1742 (DNLK…SEID), and 1762 to 1790 (LKDL…GQVA). Residues 1194–1209 (ESIKKKNDELEGEVKA) are compositionally biased toward basic and acidic residues. 4 stretches are compositionally biased toward basic and acidic residues: residues 1485 to 1512 (GLKK…KLES), 1519 to 1547 (TELK…EDIK), 1655 to 1667 (QKSE…EVRK), and 1722 to 1738 (DNLK…NEDR). Serine 1770 is subject to Phosphoserine. The segment covering 1770–1790 (SSDEEDDEEDDEEDEEEGQVA) has biased composition (acidic residues).

It belongs to the VDP/USO1/EDE1 family. In terms of assembly, homodimer. Dimerizes by parallel association of the tails, resulting in an elongated structure with two globular head domains side by side, and a long rod-like tail structure.

Its subcellular location is the cytoplasm. The protein resides in the cytoskeleton. It is found in the cytoplasmic vesicle membrane. The protein localises to the endoplasmic reticulum membrane. It localises to the golgi apparatus membrane. Functionally, required for protein transport from the ER to the Golgi complex. This chain is Intracellular protein transport protein USO1 (USO1), found in Saccharomyces cerevisiae (strain ATCC 204508 / S288c) (Baker's yeast).